The primary structure comprises 957 residues: Valine--tRNA ligase (957 aa).

The 'HIGH' region motif lies at 42–52 (PNVTGSLHMGH). The short motif at 554–558 (KMSKS) is the 'KMSKS' region element. Lys557 provides a ligand contact to ATP. Positions 890-956 (DKDAELARLA…LEAQQETIAA (67 aa)) form a coiled coil.

It belongs to the class-I aminoacyl-tRNA synthetase family. ValS type 1 subfamily. Monomer.

The protein resides in the cytoplasm. The catalysed reaction is tRNA(Val) + L-valine + ATP = L-valyl-tRNA(Val) + AMP + diphosphate. Its function is as follows. Catalyzes the attachment of valine to tRNA(Val). As ValRS can inadvertently accommodate and process structurally similar amino acids such as threonine, to avoid such errors, it has a 'posttransfer' editing activity that hydrolyzes mischarged Thr-tRNA(Val) in a tRNA-dependent manner. This is Valine--tRNA ligase from Aliivibrio fischeri (strain ATCC 700601 / ES114) (Vibrio fischeri).